The sequence spans 129 residues: MNSAPPSRAHQAAQRRGKVAEGLAALWLRLKGYGILAKGLKSGRGSGAGEVDLVARRGDLVAFVEVKSRATLDQAIESLTPFQRQRIERAAAAFLARRPELASCGVRFDMVLVAPWRLPRHIPDAWRID.

This sequence belongs to the UPF0102 family.

The polypeptide is UPF0102 protein amb4503 (Paramagnetospirillum magneticum (strain ATCC 700264 / AMB-1) (Magnetospirillum magneticum)).